A 194-amino-acid chain; its full sequence is Putative 3-methyladenine DNA glycosylase (194 aa).

This sequence belongs to the DNA glycosylase MPG family.

In Anaeromyxobacter sp. (strain Fw109-5), this protein is Putative 3-methyladenine DNA glycosylase.